We begin with the raw amino-acid sequence, 874 residues long: Ectonucleotide pyrophosphatase/phosphodiesterase family member 3 (874 aa).

The Cytoplasmic segment spans residues 1–11; that stretch reads MDSRLALATEE. The chain crosses the membrane as a helical; Signal-anchor for type II membrane protein span at residues 12-30; the sequence is PIKKDSLKKYKILCVVLLA. Over 31–874 the chain is Extracellular; it reads LLVIVSLGLG…TYLPTFETII (844 aa). SMB domains follow at residues 51-93 and 94-138; these read QGSC…VKST and QIWT…GESP. 13 cysteine pairs are disulfide-bonded: cysteine 54-cysteine 58, cysteine 54-cysteine 71, cysteine 58-cysteine 89, cysteine 69-cysteine 71, cysteine 69-cysteine 82, cysteine 75-cysteine 81, cysteine 82-cysteine 89, cysteine 98-cysteine 115, cysteine 103-cysteine 133, cysteine 113-cysteine 126, cysteine 119-cysteine 125, cysteine 144-cysteine 190, and cysteine 152-cysteine 364. The short motif at 78–80 is the Cell attachment site element; sequence RGD. A phosphodiesterase region spans residues 160–544; the sequence is PVILFSMDGF…HGSLNHLLKT (385 aa). Residue aspartate 167 coordinates Zn(2+). Residue lysine 204 coordinates ATP. Threonine 205 is a binding site for Zn(2+). Residue threonine 205 is the Nucleophile of the active site. Asparagine 226 contacts ATP. An N-linked (GlcNAc...) asparagine glycan is attached at asparagine 236. Aspartate 275 lines the ATP pocket. Residues asparagine 279 and asparagine 288 are each glycosylated (N-linked (GlcNAc...) asparagine). Residue tyrosine 289 participates in ATP binding. Aspartate 325, histidine 329, aspartate 372, and histidine 373 together coordinate Zn(2+). Cystine bridges form between cysteine 380/cysteine 477, cysteine 428/cysteine 817, cysteine 561/cysteine 623, cysteine 574/cysteine 679, cysteine 576/cysteine 664, and cysteine 786/cysteine 796. N-linked (GlcNAc...) asparagine glycosylation occurs at asparagine 425. Histidine 482 provides a ligand contact to Zn(2+). N-linked (GlcNAc...) asparagine glycans are attached at residues asparagine 532, asparagine 594, asparagine 687, and asparagine 701. Positions 581-874 are nuclease; the sequence is NTPGLEEQAN…TYLPTFETII (294 aa). Residues aspartate 751, asparagine 753, aspartate 755, histidine 757, and aspartate 759 each contribute to the Ca(2+) site. Asparagine 820 carries N-linked (GlcNAc...) asparagine glycosylation.

Monomer and homodimer. The cofactor is Zn(2+). Post-translationally, N-glycosylated. N-glycosylation is necessary for normal transport to the cell membrane, but is not the apical targeting signal. In terms of tissue distribution, detected at the tip of villi in the small intestine. Detected on basophils and mast cells (at protein level). Detected in the epithelial layer of the small intestine; expression is higher in the proximal part and lower in the distal part of the small intestine.

Its subcellular location is the cell membrane. The protein resides in the apical cell membrane. It localises to the secreted. It carries out the reaction a ribonucleoside 5'-triphosphate + H2O = a ribonucleoside 5'-phosphate + diphosphate + H(+). It catalyses the reaction UDP-N-acetyl-alpha-D-glucosamine + H2O = N-acetyl-alpha-D-glucosamine 1-phosphate + UMP + 2 H(+). The catalysed reaction is ATP + H2O = AMP + diphosphate + H(+). The enzyme catalyses CTP + H2O = CMP + diphosphate + H(+). It carries out the reaction GTP + H2O = GMP + diphosphate + H(+). It catalyses the reaction UTP + H2O = UMP + diphosphate + H(+). The catalysed reaction is Hydrolytically removes 5'-nucleotides successively from the 3'-hydroxy termini of 3'-hydroxy-terminated oligonucleotides.. The enzyme catalyses P(1),P(3)-bis(5'-adenosyl) triphosphate + H2O = AMP + ADP + 2 H(+). It carries out the reaction P(1),P(4)-bis(5'-adenosyl) tetraphosphate + H2O = AMP + ATP + 2 H(+). It catalyses the reaction P(1),P(5)-bis(5'-adenosyl) pentaphosphate + H2O = adenosine 5'-tetraphosphate + AMP + 2 H(+). The catalysed reaction is P(1),P(4)-bis(5'-guanosyl) tetraphosphate + H2O = GMP + GTP + 2 H(+). In terms of biological role, hydrolase that metabolizes extracellular nucleotides, including ATP, GTP, UTP and CTP. Limits mast cells and basophils response during inflammation and during the chronic phases of allergic responses by eliminating extracellular ATP, a signaling molecule activating these cells in an autocrine manner. Metabolizes extracellular ATP in the lumen of the small intestine, and thereby prevents ATP-induced apoptosis of intestinal plasmacytoid dendritic cells. Has a broad specificity and can also hydrolyze UDP-GlcNAc into UMP and GlcNAc-1-phosphate and potentially several other intracellular nucleotide sugars, including UDP-GalNAc, CMP-NeuAc, GDP-Fuc, and UDP-GlcA. Thereby, could modulate glycan biosynthesis and protein glycosylation. Can hydrolyze extracellular dinucleoside polyphosphates, including the vasoactive adenosine polyphosphates as well. In addition, displays an alkaline phosphodiesterase activity in vitro. The chain is Ectonucleotide pyrophosphatase/phosphodiesterase family member 3 from Mus musculus (Mouse).